The primary structure comprises 899 residues: Androgen receptor (899 aa).

Positions 1-537 (MEVQLGLGRV…PIDYYFPPQK (537 aa)) are modulating. The segment at 1-566 (MEVQLGLGRV…GSCKVFFKRA (566 aa)) is interaction with ZNF318. Disordered stretches follow at residues 35–146 (QNPG…LSLL) and 175–222 (QQQQ…LGGN). Ser61 carries the phosphoserine; by CDK9 modification. Ser75 carries the post-translational modification Phosphoserine. 2 stretches are compositionally biased toward low complexity: residues 94-103 (QPSQQQAASE) and 175-193 (QQQQQQQHQQQHQQHQQQQ). A compositionally biased stretch (polar residues) spans 210–222 (APSSSKDSYLGGN). Residue Tyr218 is modified to Phosphotyrosine; by CSK. Ser251 bears the Phosphoserine mark. Tyr262 carries the phosphotyrosine; by CSK and TNK2 modification. Tyr302, Tyr341, Tyr352, and Tyr357 each carry phosphotyrosine; by CSK. Tyr358 bears the Phosphotyrosine; by CSK and TNK2 mark. Lys381 participates in a covalent cross-link: Glycyl lysine isopeptide (Lys-Gly) (interchain with G-Cter in SUMO). Tyr388 bears the Phosphotyrosine; by CSK mark. The interval 436–471 (EGQLYGPGGGGGSSSPSDAGPVAPYGYTRPPQGLTS) is disordered. Lys500 is covalently cross-linked (Glycyl lysine isopeptide (Lys-Gly) (interchain with G-Cter in SUMO)). Residues Tyr514 and Tyr531 each carry the phosphotyrosine; by CSK modification. The segment at 531-898 (YYFPPQKTCL…GKVKPIYFHT (368 aa)) is interaction with LPXN. A DNA-binding region (nuclear receptor) is located at residues 538–611 (TCLICGDEAS…AGMTLGARKL (74 aa)). 2 NR C4-type zinc fingers span residues 539 to 559 (CLICGDEASGCHYGALTCGSC) and 575 to 599 (CASRNDCTIDKFRRKNCPSCRLRKC). The segment at 551 to 641 (YGALTCGSCK…TEDPSQKMTV (91 aa)) is interaction with HIPK3. The tract at residues 571–898 (QKYLCASRND…GKVKPIYFHT (328 aa)) is interaction with CCAR1. Residues 604-898 (MTLGARKLKK…GKVKPIYFHT (295 aa)) are interaction with KAT7. Ser630 is modified (phosphoserine). The NR LBD domain occupies 648 to 879 (ECQPIFLNVL…DFPEMMAEII (232 aa)). 17beta-hydroxy-5alpha-androstan-3-one contacts are provided by Asn685 and Arg732. Residues Lys825 and Lys827 each participate in a glycyl lysine isopeptide (Lys-Gly) (interchain with G-Cter in ubiquitin) cross-link. Thr857 is a 17beta-hydroxy-5alpha-androstan-3-one binding site. Tyr895 bears the Phosphotyrosine; by CSK mark.

The protein belongs to the nuclear hormone receptor family. NR3 subfamily. Binds DNA as a homodimer. Part of a ternary complex containing AR, EFCAB6/DJBP and PARK7. Interacts with HIPK3 and NR0B2 in the presence of androgen. The ligand binding domain interacts with KAT7/HBO1 in the presence of dihydrotestosterone. Interacts with EFCAB6/DJBP, PQBP1, RANBP9, SPDEF, SRA1, TGFB1I1, ZNF318 and RREB1. The AR N-terminal poly-Gln region binds Ran resulting in enhancement of AR-mediated transactivation. Ran-binding decreases as the poly-Gln length increases. Interacts with ZMIZ1/ZIMP10 and ZMIZ2/ZMIP7 which both enhance its transactivation activity. Interacts with RBAK. Interacts via the ligand-binding domain with LXXLL and FXXLF motifs from NCOA1, NCOA2, NCOA3 and MAGEA11. Interacts (via nuclear receptor DNA binding domain and nuclear receptor ligand binding domain) with NCOA4. Interacts with HIP1 (via coiled coil domain). Interacts with SLC30A9 and RAD54L2/ARIP4. Interacts with MACROD1 (via macro domain). Interacts (via ligand-binding domain) with TRIM68. Interacts with TNK2. Interacts with USP26. Interacts with RNF6. Interacts (regulated by RNF6 probably through polyubiquitination) with RNF14; regulates AR transcriptional activity. Interacts with PRMT2 and TRIM24. Interacts with RACK1. Interacts with RANBP10; this interaction enhances hormone-induced AR transcriptional activity. Interacts with PRPF6 in a hormone-independent way; this interaction enhances hormone-induced AR transcriptional activity. Interacts with STK4/MST1. Interacts with ZIPK/DAPK3. Interacts with LPXN. Interacts with MAK. Part of a complex containing AR, MAK and NCOA3. Interacts with CRY1. Interacts with CCAR1 and GATA2. Interacts with BUD31. Interacts with ARID4A. Interacts with ARID4B. Interacts (via NR LBD domain) with ZBTB7A; the interaction is direct and androgen-dependent. Interacts with NCOR1. Interacts with NCOR2. Interacts with CRY2 in a ligand-dependent manner. Phosphorylated in prostate cancer cells in response to several growth factors including EGF. Phosphorylation is induced by c-Src kinase (CSK). Tyr-514 is one of the major phosphorylation sites and an increase in phosphorylation and Src kinase activity is associated with prostate cancer progression. Phosphorylation by TNK2 enhances the DNA-binding and transcriptional activity. Phosphorylation at Ser-61 by CDK9 regulates AR promoter selectivity and cell growth. Phosphorylation by PAK6 leads to AR-mediated transcription inhibition. Post-translationally, sumoylated on Lys-381 (major) and Lys-500. Ubiquitinated. Deubiquitinated by USP26. 'Lys-6' and 'Lys-27'-linked polyubiquitination by RNF6 modulates AR transcriptional activity and specificity. In terms of processing, palmitoylated by ZDHHC7 and ZDHHC21. Palmitoylation is required for plasma membrane targeting and for rapid intracellular signaling via ERK and AKT kinases and cAMP generation.

It is found in the nucleus. The protein resides in the cytoplasm. Its function is as follows. Steroid hormone receptors are ligand-activated transcription factors that regulate eukaryotic gene expression and affect cellular proliferation and differentiation in target tissues. Transcription factor activity is modulated by bound coactivator and corepressor proteins like ZBTB7A that recruits NCOR1 and NCOR2 to the androgen response elements/ARE on target genes, negatively regulating androgen receptor signaling and androgen-induced cell proliferation. Transcription activation is also down-regulated by NR0B2. Activated, but not phosphorylated, by HIPK3 and ZIPK/DAPK3. The sequence is that of Androgen receptor (Ar) from Mus musculus (Mouse).